A 194-amino-acid chain; its full sequence is E3 ubiquitin-protein ligase RNF4 (194 aa).

A compositionally biased stretch (basic residues) spans 1 to 12 (MSTRNPQRKRRG). The required for ubiquitination activity stretch occupies residues 1-20 (MSTRNPQRKRRGGTVNSRQT). The tract at residues 1-39 (MSTRNPQRKRRGGTVNSRQTQKRTRETTSTPEVSLETEP) is disordered. The interval 6–65 (PQRKRRGGTVNSRQTQKRTRETTSTPEVSLETEPIELVETVGDEIVDLTCESLEPVVVDL) is mediates interaction with TRPS1. The short motif at 40-43 (IELV) is the SUMO interaction motif 1; mediates the binding to polysumoylated substrates element. An SUMO interaction motif 2; mediates the binding to polysumoylated substrates motif is present at residues 50-53 (IVDL). The SUMO interaction motif 3; mediates the binding to polysumoylated substrates motif lies at 61–63 (VVV). The SUMO interaction motif 4; mediates the binding to polysumoylated substrates motif lies at 71 to 74 (VVIV). Phosphoserine is present on residues Ser98 and Ser99. Residues 110–130 (VYVTTHTPRSTKDDGATGPRP) are disordered. Zn(2+) contacts are provided by Cys136, Cys139, Cys158, His160, Cys163, Cys166, Cys177, and Cys180. The RING-type zinc finger occupies 136-181 (CPICMDGYSEIVQNGRLIVSTECGHVFCSQCLRDSLKNANTCPTCR).

As to quaternary structure, homodimer (via RING-type zinc finger domain). Interacts with GSC2. Interacts with AR/the androgen receptor and TBP. Interacts with TCF20. Interacts with PATZ1. Interacts with TRPS1; negatively regulates TRPS1 transcriptional repressor activity. Interacts with PML (isoform PML-1, isoform PML-2, isoform PML-3, isoform PML-4, isoform PML-5 and isoform PML-6). Interacts with PRDM1/Blimp-1. In terms of processing, sumoylated; conjugated by one or two SUMO1 moieties. Post-translationally, autoubiquitinated. In the embryo, expressed primarily in the developing nervous system with strong expression in the dorsal root ganglia and gonads. Ubiquitously expressed in the adult.

The protein resides in the cytoplasm. It localises to the nucleus. It is found in the PML body. It catalyses the reaction S-ubiquitinyl-[E2 ubiquitin-conjugating enzyme]-L-cysteine + [acceptor protein]-L-lysine = [E2 ubiquitin-conjugating enzyme]-L-cysteine + N(6)-ubiquitinyl-[acceptor protein]-L-lysine.. Its pathway is protein modification; protein ubiquitination. Its function is as follows. E3 ubiquitin-protein ligase which binds polysumoylated chains covalently attached to proteins and mediates 'Lys-6'-, 'Lys-11'-, 'Lys-48'- and 'Lys-63'-linked polyubiquitination of those substrates and their subsequent targeting to the proteasome for degradation. Regulates the degradation of several proteins including PML and the transcriptional activator PEA3. Involved in chromosome alignment and spindle assembly, it regulates the kinetochore CENPH-CENPI-CENPK complex by targeting polysumoylated CENPI to proteasomal degradation. Regulates the cellular responses to hypoxia and heat shock through degradation of respectively EPAS1 and PARP1. Alternatively, it may also bind DNA/nucleosomes and have a more direct role in the regulation of transcription for instance enhancing basal transcription and steroid receptor-mediated transcriptional activation. Catalyzes ubiquitination of sumoylated PARP1 in response to PARP1 trapping to chromatin, leading to PARP1 removal from chromatin by VCP/p97. This is E3 ubiquitin-protein ligase RNF4 from Mus musculus (Mouse).